The following is a 180-amino-acid chain: Translation initiation factor IF-3 (180 aa).

The protein belongs to the IF-3 family. As to quaternary structure, monomer.

The protein resides in the cytoplasm. Functionally, IF-3 binds to the 30S ribosomal subunit and shifts the equilibrium between 70S ribosomes and their 50S and 30S subunits in favor of the free subunits, thus enhancing the availability of 30S subunits on which protein synthesis initiation begins. The protein is Translation initiation factor IF-3 of Pasteurella multocida (strain Pm70).